Here is a 133-residue protein sequence, read N- to C-terminus: U-scoloptoxin(11)-Sm1a (133 aa).

An N-terminal signal peptide occupies residues 1-19 (MIWFLAFILFLAAGELVSS).

It belongs to the scoloptoxin-11 family. Post-translationally, contains 10 disulfide bonds. As to expression, expressed by the venom gland.

The protein resides in the secreted. This chain is U-scoloptoxin(11)-Sm1a, found in Scolopendra morsitans (Tanzanian blue ringleg centipede).